We begin with the raw amino-acid sequence, 213 residues long: Octanoyltransferase (213 aa).

One can recognise a BPL/LPL catalytic domain in the interval 32–207 (DHTPDEIWLV…KLLALLNNPP (176 aa)). Substrate contacts are provided by residues 71–78 (RGGQVTYH), 138–140 (SLG), and 151–153 (GLA). The active-site Acyl-thioester intermediate is the Cys169.

The protein belongs to the LipB family.

The protein resides in the cytoplasm. It catalyses the reaction octanoyl-[ACP] + L-lysyl-[protein] = N(6)-octanoyl-L-lysyl-[protein] + holo-[ACP] + H(+). The protein operates within protein modification; protein lipoylation via endogenous pathway; protein N(6)-(lipoyl)lysine from octanoyl-[acyl-carrier-protein]: step 1/2. In terms of biological role, catalyzes the transfer of endogenously produced octanoic acid from octanoyl-acyl-carrier-protein onto the lipoyl domains of lipoate-dependent enzymes. Lipoyl-ACP can also act as a substrate although octanoyl-ACP is likely to be the physiological substrate. The chain is Octanoyltransferase from Enterobacter sp. (strain 638).